The sequence spans 335 residues: tRNA N6-adenosine threonylcarbamoyltransferase (335 aa).

The Fe cation site is built by His-110 and His-114. Substrate is bound by residues 132 to 136 (LVSGG), Asp-165, Gly-178, and Asn-271. Asp-299 is a binding site for Fe cation.

Belongs to the KAE1 / TsaD family. Fe(2+) is required as a cofactor.

It is found in the cytoplasm. The catalysed reaction is L-threonylcarbamoyladenylate + adenosine(37) in tRNA = N(6)-L-threonylcarbamoyladenosine(37) in tRNA + AMP + H(+). In terms of biological role, required for the formation of a threonylcarbamoyl group on adenosine at position 37 (t(6)A37) in tRNAs that read codons beginning with adenine. Is involved in the transfer of the threonylcarbamoyl moiety of threonylcarbamoyl-AMP (TC-AMP) to the N6 group of A37, together with TsaE and TsaB. TsaD likely plays a direct catalytic role in this reaction. This Campylobacter jejuni subsp. jejuni serotype O:23/36 (strain 81-176) protein is tRNA N6-adenosine threonylcarbamoyltransferase.